The chain runs to 232 residues: Demethylmenaquinone methyltransferase (232 aa).

S-adenosyl-L-methionine contacts are provided by residues threonine 58, aspartate 79, and asparagine 104–alanine 105.

This sequence belongs to the class I-like SAM-binding methyltransferase superfamily. MenG/UbiE family.

It catalyses the reaction a 2-demethylmenaquinol + S-adenosyl-L-methionine = a menaquinol + S-adenosyl-L-homocysteine + H(+). The protein operates within quinol/quinone metabolism; menaquinone biosynthesis; menaquinol from 1,4-dihydroxy-2-naphthoate: step 2/2. Methyltransferase required for the conversion of demethylmenaquinol (DMKH2) to menaquinol (MKH2). This is Demethylmenaquinone methyltransferase from Bacillus licheniformis (strain ATCC 14580 / DSM 13 / JCM 2505 / CCUG 7422 / NBRC 12200 / NCIMB 9375 / NCTC 10341 / NRRL NRS-1264 / Gibson 46).